A 109-amino-acid chain; its full sequence is Flagellar hook-basal body complex protein FliE (109 aa).

This sequence belongs to the FliE family.

The protein localises to the bacterial flagellum basal body. This is Flagellar hook-basal body complex protein FliE from Pseudomonas savastanoi pv. phaseolicola (strain 1448A / Race 6) (Pseudomonas syringae pv. phaseolicola (strain 1448A / Race 6)).